The sequence spans 278 residues: HTH-type transcriptional activator RhaS (278 aa).

Residues 174–272 form the HTH araC/xylS-type domain; sequence NLLLAWLEDH…NWSPRDIRQG (99 aa). 2 consecutive DNA-binding regions (H-T-H motif) follow at residues 191 to 212 and 239 to 262; these read DAVA…KQQT and VTDI…RREF.

As to quaternary structure, binds DNA as a dimer.

The protein localises to the cytoplasm. Functionally, activates expression of the rhaBAD and rhaT operons. The sequence is that of HTH-type transcriptional activator RhaS from Escherichia coli O157:H7.